The primary structure comprises 315 residues: 4-hydroxy-3-methylbut-2-enyl diphosphate reductase (315 aa).

Residue Cys-12 participates in [4Fe-4S] cluster binding. The (2E)-4-hydroxy-3-methylbut-2-enyl diphosphate site is built by His-43 and His-81. Dimethylallyl diphosphate is bound by residues His-43 and His-81. Isopentenyl diphosphate is bound by residues His-43 and His-81. Cys-103 contributes to the [4Fe-4S] cluster binding site. His-131 is a (2E)-4-hydroxy-3-methylbut-2-enyl diphosphate binding site. His-131 is a binding site for dimethylallyl diphosphate. His-131 lines the isopentenyl diphosphate pocket. The active-site Proton donor is the Glu-133. (2E)-4-hydroxy-3-methylbut-2-enyl diphosphate is bound at residue Thr-170. Cys-198 contributes to the [4Fe-4S] cluster binding site. (2E)-4-hydroxy-3-methylbut-2-enyl diphosphate contacts are provided by Ser-226, Asn-228, and Ser-271. 3 residues coordinate dimethylallyl diphosphate: Ser-226, Asn-228, and Ser-271. Isopentenyl diphosphate contacts are provided by Ser-226, Asn-228, and Ser-271.

It belongs to the IspH family. [4Fe-4S] cluster serves as cofactor.

The catalysed reaction is isopentenyl diphosphate + 2 oxidized [2Fe-2S]-[ferredoxin] + H2O = (2E)-4-hydroxy-3-methylbut-2-enyl diphosphate + 2 reduced [2Fe-2S]-[ferredoxin] + 2 H(+). It carries out the reaction dimethylallyl diphosphate + 2 oxidized [2Fe-2S]-[ferredoxin] + H2O = (2E)-4-hydroxy-3-methylbut-2-enyl diphosphate + 2 reduced [2Fe-2S]-[ferredoxin] + 2 H(+). Its pathway is isoprenoid biosynthesis; dimethylallyl diphosphate biosynthesis; dimethylallyl diphosphate from (2E)-4-hydroxy-3-methylbutenyl diphosphate: step 1/1. It participates in isoprenoid biosynthesis; isopentenyl diphosphate biosynthesis via DXP pathway; isopentenyl diphosphate from 1-deoxy-D-xylulose 5-phosphate: step 6/6. Its function is as follows. Catalyzes the conversion of 1-hydroxy-2-methyl-2-(E)-butenyl 4-diphosphate (HMBPP) into a mixture of isopentenyl diphosphate (IPP) and dimethylallyl diphosphate (DMAPP). Acts in the terminal step of the DOXP/MEP pathway for isoprenoid precursor biosynthesis. The sequence is that of 4-hydroxy-3-methylbut-2-enyl diphosphate reductase from Anoxybacillus flavithermus (strain DSM 21510 / WK1).